The primary structure comprises 292 residues: MENNHNNFSNLITILQEYWTEQECAIFQPLDLPIGAGTFHNTTFFGTIGPEPIRAAYIQSCRRPTDGRYGKNPNRLQHYYQFQVIIKPPLKNIQNIYLKSLNLLKISEKRNDIRFVEDNWENPTLGAWGIGWEVWLNGMEITQFTYFQQVGGLECNPVTVEITYGLERIAMHMQNQSNVYDLIWSENKFKKITYGDIFQQNEIEQSKYNFEYSDINLLFEYFQKYIFEAKKLIELKKPLLLVSYEKILQASHVFNLLDARKAISSSERQNYILKIRKLAKKIAQEYLYSRKK.

The protein belongs to the class-II aminoacyl-tRNA synthetase family. Tetramer of two alpha and two beta subunits.

It is found in the cytoplasm. It carries out the reaction tRNA(Gly) + glycine + ATP = glycyl-tRNA(Gly) + AMP + diphosphate. This Buchnera aphidicola subsp. Schizaphis graminum (strain Sg) protein is Glycine--tRNA ligase alpha subunit.